Consider the following 239-residue polypeptide: Regulator of G-protein signaling 20 (239 aa).

The segment at 1 to 29 (MRTANGGPRARASPSASPADPGLPEGSER) is disordered. The span at 8–19 (PRARASPSASPA) shows a compositional bias: low complexity. The 117-residue stretch at 113–229 (SFDNLMVTPA…MNSTVYKDLL (117 aa)) folds into the RGS domain.

Forms a complex with G(alpha)z/i2 subunits and mu-opioid receptors; the formation of this complex results in mu-opioid receptor desensitization. Interacts with OPRM1. Post-translationally, fatty acylated. Heavily palmitoylated in the cysteine string motif. N- and O-glycosylated in synapsomal membranes. In terms of processing, serine phosphorylated in synapsomal membranes. Post-translationally, sumoylated with SUMO1, SUMO2 and SUMO3. Sumoylation increases binding to the G-proteins, G(alpha)-i2 and G(z), and interaction with mu-opioid receptors.

The protein resides in the membrane. Its subcellular location is the nucleus. It localises to the cytoplasm. In terms of biological role, inhibits signal transduction by increasing the GTPase activity of G protein alpha subunits thereby driving them into their inactive GDP-bound form. Binds selectively to G(z)-alpha and G(alpha)-i2 subunits, accelerates their GTPase activity and regulates their signaling activities. The G(z)-alpha activity is inhibited by the phosphorylation and palmitoylation of the G-protein. Negatively regulates mu-opioid receptor-mediated activation of the G-proteins. The chain is Regulator of G-protein signaling 20 (Rgs20) from Mus musculus (Mouse).